The sequence spans 357 residues: Carbamoyl phosphate synthase small chain (357 aa).

Residues 1–168 (MSKRLLILED…STATAYPSPN (168 aa)) form a CPSase region. L-glutamine contacts are provided by S46, G220, and G222. One can recognise a Glutamine amidotransferase type-1 domain in the interval 172–357 (KVVVVDFGLK…FMDLMDNFKK (186 aa)). The active-site Nucleophile is C247. L248, Q251, N289, G291, and Y292 together coordinate L-glutamine. Residues H331 and D333 contribute to the active site.

This sequence belongs to the CarA family. As to quaternary structure, composed of two chains; the small (or glutamine) chain promotes the hydrolysis of glutamine to ammonia, which is used by the large (or ammonia) chain to synthesize carbamoyl phosphate. Tetramer of heterodimers (alpha,beta)4.

It carries out the reaction hydrogencarbonate + L-glutamine + 2 ATP + H2O = carbamoyl phosphate + L-glutamate + 2 ADP + phosphate + 2 H(+). The enzyme catalyses L-glutamine + H2O = L-glutamate + NH4(+). The protein operates within amino-acid biosynthesis; L-arginine biosynthesis; carbamoyl phosphate from bicarbonate: step 1/1. It participates in pyrimidine metabolism; UMP biosynthesis via de novo pathway; (S)-dihydroorotate from bicarbonate: step 1/3. Small subunit of the glutamine-dependent carbamoyl phosphate synthetase (CPSase). CPSase catalyzes the formation of carbamoyl phosphate from the ammonia moiety of glutamine, carbonate, and phosphate donated by ATP, constituting the first step of 2 biosynthetic pathways, one leading to arginine and/or urea and the other to pyrimidine nucleotides. The small subunit (glutamine amidotransferase) binds and cleaves glutamine to supply the large subunit with the substrate ammonia. The protein is Carbamoyl phosphate synthase small chain of Lactococcus lactis subsp. cremoris (strain MG1363).